We begin with the raw amino-acid sequence, 413 residues long: N-acylneuraminate cytidylyltransferase (413 aa).

It belongs to the CMP-NeuNAc synthase family. Requires Mg(2+) as cofactor. Mn(2+) is required as a cofactor.

It is found in the cytoplasm. The catalysed reaction is an N-acylneuraminate + CTP = a CMP-N-acyl-beta-neuraminate + diphosphate. Its function is as follows. Catalyzes the formation of CMP-N-acetylneuraminic acid (CMP-NeuNAc), which is essential for the formation of the capsule. In Streptococcus agalactiae serotype Ia (strain ATCC 27591 / A909 / CDC SS700), this protein is N-acylneuraminate cytidylyltransferase (neuA).